The chain runs to 124 residues: Small ribosomal subunit protein uS12 (124 aa).

The residue at position 89 (Asp89) is a 3-methylthioaspartic acid. The interval 102-124 (LDTSGVNNRKHGRSKYGTKRPKS) is disordered. Positions 109–124 (NRKHGRSKYGTKRPKS) are enriched in basic residues.

The protein belongs to the universal ribosomal protein uS12 family. Part of the 30S ribosomal subunit. Contacts proteins S8 and S17. May interact with IF1 in the 30S initiation complex.

With S4 and S5 plays an important role in translational accuracy. In terms of biological role, interacts with and stabilizes bases of the 16S rRNA that are involved in tRNA selection in the A site and with the mRNA backbone. Located at the interface of the 30S and 50S subunits, it traverses the body of the 30S subunit contacting proteins on the other side and probably holding the rRNA structure together. The combined cluster of proteins S8, S12 and S17 appears to hold together the shoulder and platform of the 30S subunit. The protein is Small ribosomal subunit protein uS12 of Francisella tularensis subsp. novicida (strain U112).